The primary structure comprises 880 residues: Alanine--tRNA ligase (880 aa).

Residues H566, H570, C668, and H672 each contribute to the Zn(2+) site.

It belongs to the class-II aminoacyl-tRNA synthetase family. Zn(2+) serves as cofactor.

It is found in the cytoplasm. It carries out the reaction tRNA(Ala) + L-alanine + ATP = L-alanyl-tRNA(Ala) + AMP + diphosphate. Catalyzes the attachment of alanine to tRNA(Ala) in a two-step reaction: alanine is first activated by ATP to form Ala-AMP and then transferred to the acceptor end of tRNA(Ala). Also edits incorrectly charged Ser-tRNA(Ala) and Gly-tRNA(Ala) via its editing domain. The polypeptide is Alanine--tRNA ligase (Alkaliphilus oremlandii (strain OhILAs) (Clostridium oremlandii (strain OhILAs))).